A 1311-amino-acid polypeptide reads, in one-letter code: MPVSLAVCETTTTTTANVVNAALRESLLGGSRSGAAVAGSGSASSLISGAGGAGASAANDDDSSSTATANTNLQNQIVASAKRVLLAKIEYEEVENYNDSVLDNLKTKYVVIKSPTPAAAAAATNNGNSNSAGSKILGANGHDNRQKQQNANGGCSTPTTTTTQTSSSSTSSSSIEHNNNPNELPKPKRVLYQRENIRIGWKQSERKWQIGAGMINVGNTCYLNSTLQALFHIPALANWLNSEQSHLENCNIGGESGGGGGGGGGNNGGFCIICAMAKTLQSTQSNASAIRPYHIYSKLKQICKHMVIGRQEDAHEFLRFLVEAMEKAYLMRYRNYKELDQLVKETTPLNQIFGGYLRSEVRCLSCNHVSITFQHFQDLLLDIRKSDTLDEAFDGYFSRERLEDMGYKCEGCKKKVSATKQFSLQRAPITLCIQLKRFSMIGNKLTKQISFKPRIDLSRFAARSPTAQGQLPLTYRLVSLVTHLGVSQHCGHYTAIGLTESGSYYNFDDSYVRPIAMQSVCSTNSYIMFYELDLNQPLATPANKLNGLRQLSNGHHHHQQQQQQHQQQQQQQPTVVATIASSPMATTRFIGPQLPPGGLNGYAMTTTTTATNNTTNGHSQKTAIQFKPQQNGILTVGSGKFQESGQQKSPLVGTNHKNEAPAVAPNANANANGKSSSNPNTNTTINTNTNNGNSNNNNTNATTANNSNKLNQQQQQYLPMSSSDEEDSDEEKMKRPTTTTPQLPSMPKMDGGGDEKPKTLTLTPTTTPTASTPTVSNPLKRLVPYESASEEEESSSGTPSSSTPTTTTTAAAAAASSPMQATAAATLPPPPTPTNARKRSLPDHHHHHPHHHVMVNGHGKSPKPASMPPATNFNSSSSKQKTDAIDEIFKSLNNFNKKRINNKNQKHNEGDEEEDDEETLEKETNNSSRLVSSSTNTSPTTNGWKQSQIVSSSSSNSKNVSTSAAAAAATTSSSTSTSAPPSPKTPPSPAVINSKTGLWKVTRNLDDDDDEEEEDEDDEEHIAPTPPPVVAKTHKNPFSSQQKPTPSPSTEAAPKRQKLFNGTSSSTPHVGNGYQSEPSTPNGGGSGSGSNGCLNELLKQSHRGYGSSSVLSWNGKQTELDKEPFELVCAKRIAVDHGDHDDGGGGDDGGGVGVVTTTTTTTTTTKNTTKTLTADAQEQRQRDLDDDEENEMDRGRQRKVKTATANGKSSGNSNNTTPGYNPFQEYESQKRWHNKSSNGPPRFYTQHASSSYRSNFHQRNKFKCNRGGNGGGGSGGISKFDHRHGLQRHLAAGGGFPRRPNANQQQQQQQS.

2 stretches are compositionally biased toward low complexity: residues 120–134 (AAAA…SAGS) and 156–174 (STPT…SSSS). The segment at 120 to 189 (AAAATNNGNS…NPNELPKPKR (70 aa)) is disordered. The USP domain maps to 212-533 (AGMINVGNTC…NSYIMFYELD (322 aa)). The active-site Nucleophile is cysteine 221. Histidine 492 (proton acceptor) is an active-site residue. The interval 546-575 (NGLRQLSNGHHHHQQQQQQHQQQQQQQPTV) is disordered. The span at 560–572 (QQQQQHQQQQQQQ) shows a compositional bias: low complexity. Serine 581 is subject to Phosphoserine. Disordered stretches follow at residues 587–620 (TRFI…GHSQ), 640–1095 (KFQE…GCLN), and 1136–1311 (DHGD…QQQS). 3 stretches are compositionally biased toward low complexity: residues 605–616 (TTTTTATNNTTN), 660–716 (APAV…QQQQ), and 759–774 (TLTL…STPT). Threonine 767 carries the phosphothreonine modification. Phosphoserine occurs at positions 787 and 789. The span at 795-826 (SSGTPSSSTPTTTTTAAAAAASSPMQATAAAT) shows a compositional bias: low complexity. A compositionally biased stretch (basic residues) spans 836-853 (ARKRSLPDHHHHHPHHHV). Over residues 869–879 (PATNFNSSSSK) the composition is skewed to polar residues. Positions 880–889 (QKTDAIDEIF) are enriched in basic and acidic residues. Basic residues predominate over residues 896–905 (NKKRINNKNQ). The span at 910–920 (GDEEEDDEETL) shows a compositional bias: acidic residues. Composition is skewed to low complexity over residues 925–942 (NNSS…PTTN) and 950–979 (VSSS…STSA). The span at 980–989 (PPSPKTPPSP) shows a compositional bias: pro residues. Phosphoserine is present on serine 982. Threonine 985 is subject to Phosphothreonine. Serine 988 carries the post-translational modification Phosphoserine. Residues 1006–1020 (DDDDDEEEEDEDDEE) show a composition bias toward acidic residues. The span at 1037-1050 (PFSSQQKPTPSPST) shows a compositional bias: low complexity. A Phosphoserine modification is found at serine 1047. A Phosphothreonine modification is found at threonine 1050. Over residues 1060–1081 (FNGTSSSTPHVGNGYQSEPSTP) the composition is skewed to polar residues. Composition is skewed to low complexity over residues 1154-1176 (VVTT…TADA) and 1204-1221 (TANG…PGYN). The span at 1246-1255 (QHASSSYRSN) shows a compositional bias: polar residues. Over residues 1267-1276 (GGNGGGGSGG) the composition is skewed to gly residues.

This sequence belongs to the peptidase C19 family. As to quaternary structure, interacts with atms/PAF1, but not with CycT.

It is found in the nucleus. The protein resides in the nucleolus. It carries out the reaction Thiol-dependent hydrolysis of ester, thioester, amide, peptide and isopeptide bonds formed by the C-terminal Gly of ubiquitin (a 76-residue protein attached to proteins as an intracellular targeting signal).. Functionally, required for maintaining multiple types of adult stem cells, including male and female germline, epithelial follicle cell and intestinal stem cells. May function as a transcriptional repressor by continually deubiquiting histone H2B at the promoters of genes critical for cellular differentiation, thereby preventing histone H3 'Lys-4' trimethylation (H3K4). Controls selective autophagy activation by ubiquitinated proteins. This Drosophila willistoni (Fruit fly) protein is Ubiquitin carboxyl-terminal hydrolase 36 (Usp36).